The primary structure comprises 102 residues: NADH-quinone oxidoreductase subunit K (102 aa).

The next 3 membrane-spanning stretches (helical) occupy residues 5–25, 31–51, and 66–86; these read LEHY…GIFV, IVIL…MVAF, and FVLT…VVFF.

Belongs to the complex I subunit 4L family. NDH-1 is composed of 14 different subunits. Subunits NuoA, H, J, K, L, M, N constitute the membrane sector of the complex.

The protein resides in the cellular chromatophore membrane. The catalysed reaction is a quinone + NADH + 5 H(+)(in) = a quinol + NAD(+) + 4 H(+)(out). Its function is as follows. NDH-1 shuttles electrons from NADH, via FMN and iron-sulfur (Fe-S) centers, to quinones in the respiratory chain. The immediate electron acceptor for the enzyme in this species is believed to be ubiquinone. Couples the redox reaction to proton translocation (for every two electrons transferred, four hydrogen ions are translocated across the cytoplasmic membrane), and thus conserves the redox energy in a proton gradient. This Rhodobacter capsulatus (Rhodopseudomonas capsulata) protein is NADH-quinone oxidoreductase subunit K.